The sequence spans 139 residues: Protein archease (139 aa).

Positions 12, 138, and 139 each coordinate Ca(2+).

The protein belongs to the archease family.

Functionally, activates the tRNA-splicing ligase complex by facilitating the enzymatic turnover of catalytic subunit RtcB. Acts by promoting the guanylylation of RtcB, a key intermediate step in tRNA ligation. Can also alter the NTP specificity of RtcB such that ATP, dGTP or ITP is used efficiently. This chain is Protein archease, found in Saccharolobus islandicus (strain L.S.2.15 / Lassen #1) (Sulfolobus islandicus).